Here is a 95-residue protein sequence, read N- to C-terminus: Fluoride-specific ion channel FluC 1 (95 aa).

Helical transmembrane passes span 23–43, 49–69, and 70–90; these read LIDA…LMGW, LWGT…LLMF, and DGAY…WLLG. 2 residues coordinate Na(+): glycine 56 and threonine 59.

Belongs to the fluoride channel Fluc/FEX (TC 1.A.43) family.

It is found in the cell membrane. The catalysed reaction is fluoride(in) = fluoride(out). Its activity is regulated as follows. Na(+) is not transported, but it plays an essential structural role and its presence is essential for fluoride channel function. In terms of biological role, fluoride-specific ion channel. Important for reducing fluoride concentration in the cell, thus reducing its toxicity. The chain is Fluoride-specific ion channel FluC 1 from Corynebacterium diphtheriae (strain ATCC 700971 / NCTC 13129 / Biotype gravis).